The following is a 154-amino-acid chain: Insulin-like peptide 1 (154 aa).

Residues 1–29 (MFSQHNGAAVHGLRLQSLLIAAMLTAAMA) form the signal peptide. 3 disulfide bridges follow: C49/C138, C61/C151, and C137/C142. Positions 72–92 (RESLLGNSDDDEDTEQEVQDD) are disordered. Residues 73 to 122 (ESLLGNSDDDEDTEQEVQDDSSMWQTLDGAGYSFSPLLTNLYGSEVLIKM) constitute a propeptide, connecting peptide. Over residues 79–91 (SDDDEDTEQEVQD) the composition is skewed to acidic residues.

It belongs to the insulin family. In terms of assembly, heterodimer of a B chain and an A chain linked by two disulfide bonds.

The protein localises to the secreted. Its function is as follows. Possible ligand of InR/insulin-like receptor. This chain is Insulin-like peptide 1, found in Drosophila melanogaster (Fruit fly).